The sequence spans 307 residues: Homoserine kinase (307 aa).

ATP is bound at residue 85–95 (PLTRGLGSSAA).

It belongs to the GHMP kinase family. Homoserine kinase subfamily.

It is found in the cytoplasm. It catalyses the reaction L-homoserine + ATP = O-phospho-L-homoserine + ADP + H(+). Its pathway is amino-acid biosynthesis; L-threonine biosynthesis; L-threonine from L-aspartate: step 4/5. Catalyzes the ATP-dependent phosphorylation of L-homoserine to L-homoserine phosphate. This Caldicellulosiruptor bescii (strain ATCC BAA-1888 / DSM 6725 / KCTC 15123 / Z-1320) (Anaerocellum thermophilum) protein is Homoserine kinase.